Here is a 345-residue protein sequence, read N- to C-terminus: S-adenosylmethionine:tRNA ribosyltransferase-isomerase (345 aa).

It belongs to the QueA family. As to quaternary structure, monomer.

It is found in the cytoplasm. The catalysed reaction is 7-aminomethyl-7-carbaguanosine(34) in tRNA + S-adenosyl-L-methionine = epoxyqueuosine(34) in tRNA + adenine + L-methionine + 2 H(+). It functions in the pathway tRNA modification; tRNA-queuosine biosynthesis. Functionally, transfers and isomerizes the ribose moiety from AdoMet to the 7-aminomethyl group of 7-deazaguanine (preQ1-tRNA) to give epoxyqueuosine (oQ-tRNA). This is S-adenosylmethionine:tRNA ribosyltransferase-isomerase from Helicobacter pylori (strain Shi470).